The primary structure comprises 236 residues: CD81 antigen (236 aa).

The Cytoplasmic portion of the chain corresponds to 1–12 (MGVEGCTKCIKY). The chain crosses the membrane as a helical span at residues 13–33 (LLFVFNFVFWLAGGVILGVAL). The Extracellular portion of the chain corresponds to 34–63 (WLRHDPQTTNLLYLELGDKPAPNTFYVGIY). The helical transmembrane segment at 64 to 84 (ILIAVGAVMMFVGFLGCYGAI) threads the bilayer. The Cytoplasmic segment spans residues 85 to 89 (QESQC). Residues 90–112 (LLGTFFTCLVILFACEVAAGIWG) traverse the membrane as a helical segment. Residues 113–201 (FVNKDQIAKD…QKIDDLFSGK (89 aa)) are Extracellular-facing. 2 cysteine pairs are disulfide-bonded: Cys156-Cys190 and Cys157-Cys175. Residues 202–224 (LYLIGIAAIVVAVIMIFEMILSM) traverse the membrane as a helical segment. Residue Glu219 participates in cholesterol binding. Topologically, residues 225-236 (VLCCGIRNSSVY) are cytoplasmic.

Belongs to the tetraspanin (TM4SF) family. As to quaternary structure, homodimer. Part of a complex composed of CD19, CR2/CD21, CD81 and IFITM1/CD225 in the membrane of mature B cells. Interacts (via the second extracellular domain) with CD19; this interaction is initiated early during biosynthesis in the ER and enables trafficking of only properly folded CD19. Part of a complex that includes MHC class II/HLA-DR molecules and IFITM1. Interacts with IFITM1. Interacts with IFITM2 and IFITM3. Part of integrin-tetraspanin complex composed of CD9, CD81, beta-1 and beta-2 integrins in the membrane of monocyte/macrophages. Interacts (via the second extracellular domain) with integrin ITGAV:ITGB3. Interacts with CD247/CD3 zeta, ICAM1 and CD9 at the immune synapse on T cell membrane. Part of a GPCR-tetraspanin complex consisting at least of ADGRG1, CD81, possibly CD9, and GNA11 in which CD81 enhances the association of ADGRG1 with GNA11. Part of a complex composed of CD9, CD81, PTGFRN and IGSF8. Interacts directly with IGSF8. Interacts with CD53 and SCIMP. Interacts with SAMHD1 (via its C-terminus). Interacts with glypican GPC3 and with the transcriptional repressor HHEX; binding to GPC3 decreases the availability of free CD81 for binding to HHEX, resulting in nuclear translocation of HHEX and transcriptional repression. Interacts with CLDN1. Interacts with CLDN6 and CLDN9. Post-translationally, not glycosylated. Likely constitutively palmitoylated at low levels. Protein palmitoylation is up-regulated upon coligation of BCR and CD9-C2R-CD81 complexes in lipid rafts.

The protein localises to the cell membrane. The protein resides in the basolateral cell membrane. Functionally, structural component of specialized membrane microdomains known as tetraspanin-enriched microdomains (TERMs), which act as platforms for receptor clustering and signaling. Essential for trafficking and compartmentalization of CD19 receptor on the surface of activated B cells. Upon initial encounter with microbial pathogens, enables the assembly of CD19-CR2/CD21 and B cell receptor (BCR) complexes at signaling TERMs, lowering the threshold dose of antigen required to trigger B cell clonal expansion and antibody production. In T cells, facilitates the localization of CD247/CD3 zeta at antigen-induced synapses with B cells, providing for costimulation and polarization toward T helper type 2 phenotype. Present in MHC class II compartments, may also play a role in antigen presentation. Can act both as positive and negative regulator of homotypic or heterotypic cell-cell fusion processes. Positively regulates sperm-egg fusion and may be involved in acrosome reaction. In myoblasts, associates with CD9 and PTGFRN and inhibits myotube fusion during muscle regeneration. In macrophages, associates with CD9 and beta-1 and beta-2 integrins, and prevents macrophage fusion into multinucleated giant cells specialized in ingesting complement-opsonized large particles. Also prevents the fusion of mononuclear cell progenitors into osteoclasts in charge of bone resorption. May regulate the compartmentalization of enzymatic activities. In T cells, defines the subcellular localization of dNTPase SAMHD1 and permits its degradation by the proteasome, thereby controlling intracellular dNTP levels. Also involved in cell adhesion and motility. Positively regulates integrin-mediated adhesion of macrophages, particularly relevant for the inflammatory response in the lung. The polypeptide is CD81 antigen (CD81) (Pan troglodytes (Chimpanzee)).